The following is a 504-amino-acid chain: Cytochrome P450 6B2 (504 aa).

Heme is bound at residue Cys-445.

This sequence belongs to the cytochrome P450 family. The cofactor is heme.

The protein resides in the endoplasmic reticulum membrane. It localises to the microsome membrane. The catalysed reaction is an organic molecule + reduced [NADPH--hemoprotein reductase] + O2 = an alcohol + oxidized [NADPH--hemoprotein reductase] + H2O + H(+). This is Cytochrome P450 6B2 (CYP6B2) from Helicoverpa armigera (Cotton bollworm).